The following is a 283-amino-acid chain: Transmembrane protein 45B (283 aa).

Helical transmembrane passes span 7-27, 55-75, 99-119, 121-141, 153-173, 187-207, and 218-238; these read HALP…KCPF, LIEG…EQFV, MYLF…SHHV, VGLD…LFYF, IHSL…MEVF, LAIL…PLSG, and IMFI…IVGI. The segment at 261 to 283 is disordered; it reads GLRKSTSTDSSSQKALLQESDEE. Residues 264–275 are compositionally biased toward polar residues; that stretch reads KSTSTDSSSQKA.

The protein belongs to the TMEM45 family.

It is found in the membrane. This chain is Transmembrane protein 45B (tmem45b), found in Danio rerio (Zebrafish).